We begin with the raw amino-acid sequence, 335 residues long: DNA polymerase beta (335 aa).

Lys-41 participates in a covalent cross-link: Glycyl lysine isopeptide (Lys-Gly) (interchain with G-Cter in ubiquitin). Lys-60 is a binding site for K(+). Na(+) is bound at residue Lys-60. Lys-61 participates in a covalent cross-link: Glycyl lysine isopeptide (Lys-Gly) (interchain with G-Cter in ubiquitin). The K(+) site is built by Leu-62 and Val-65. Na(+) contacts are provided by Leu-62 and Val-65. Lys-72 serves as the catalytic Nucleophile; Schiff-base intermediate with DNA; for 5'-dRP lyase activity. The residue at position 72 (Lys-72) is an N6-acetyllysine. Lys-81 is covalently cross-linked (Glycyl lysine isopeptide (Lys-Gly) (interchain with G-Cter in ubiquitin)). Arg-83 is modified (omega-N-methylarginine; by PRMT6). Thr-101, Val-103, and Ile-106 together coordinate K(+). Na(+) is bound by residues Thr-101, Val-103, and Ile-106. DATP is bound at residue Arg-149. Arg-149 contacts dCTP. DGTP is bound at residue Arg-149. Arg-149 is a binding site for dTTP. At Arg-152 the chain carries Omega-N-methylarginine; by PRMT6. Ser-180, Arg-183, Gly-189, and Asp-190 together coordinate dATP. DCTP is bound by residues Ser-180, Arg-183, Gly-189, and Asp-190. Positions 180, 183, 189, 190, and 192 each coordinate dGTP. Residues Ser-180, Arg-183, Gly-189, and Asp-190 each contribute to the dTTP site. Positions 183 to 192 are DNA-binding; it reads RGAESSGDMD. Mg(2+) contacts are provided by Asp-190, Asp-192, and Asp-256.

The protein belongs to the DNA polymerase type-X family. In terms of assembly, monomer. Binds single-stranded DNA (ssDNA). Interacts with APEX1, LIG1, LIG3, FEN1, PCNA and XRCC1. Interacts with HUWE1/ARF-BP1, STUB1/CHIP and USP47. Interacts with FAM168A. Requires Mg(2+) as cofactor. Post-translationally, methylation by PRMT6 stimulates the polymerase activity by enhancing DNA binding and processivity. In terms of processing, ubiquitinated at Lys-41, Lys-61 and Lys-81: monoubiquitinated by HUWE1/ARF-BP1. Monoubiquitinated protein is then the target of STUB1/CHIP, which catalyzes polyubiquitination from monoubiquitin, leading to degradation by the proteasome. USP47 mediates the deubiquitination of monoubiquitinated protein, preventing polyubiquitination by STUB1/CHIP and its subsequent degradation.

The protein localises to the nucleus. It localises to the cytoplasm. It carries out the reaction DNA(n) + a 2'-deoxyribonucleoside 5'-triphosphate = DNA(n+1) + diphosphate. The enzyme catalyses a 5'-end 2'-deoxyribose-2'-deoxyribonucleotide-DNA = (2E,4S)-4-hydroxypenten-2-al-5-phosphate + a 5'-end 5'-phospho-2'-deoxyribonucleoside-DNA + H(+). The catalysed reaction is 2'-deoxyribonucleotide-(2'-deoxyribose 5'-phosphate)-2'-deoxyribonucleotide-DNA = a 3'-end 2'-deoxyribonucleotide-(2,3-dehydro-2,3-deoxyribose 5'-phosphate)-DNA + a 5'-end 5'-phospho-2'-deoxyribonucleoside-DNA + H(+). Its function is as follows. Repair polymerase that plays a key role in base-excision repair. During this process, the damaged base is excised by specific DNA glycosylases, the DNA backbone is nicked at the abasic site by an apurinic/apyrimidic (AP) endonuclease, and POLB removes 5'-deoxyribose-phosphate from the preincised AP site acting as a 5'-deoxyribose-phosphate lyase (5'-dRP lyase); through its DNA polymerase activity, it adds one nucleotide to the 3' end of the arising single-nucleotide gap. Conducts 'gap-filling' DNA synthesis in a stepwise distributive fashion rather than in a processive fashion as for other DNA polymerases. It is also able to cleave sugar-phosphate bonds 3' to an intact AP site, acting as an AP lyase. This is DNA polymerase beta (POLB) from Homo sapiens (Human).